We begin with the raw amino-acid sequence, 158 residues long: Transcription elongation factor GreA (158 aa).

The protein belongs to the GreA/GreB family.

In terms of biological role, necessary for efficient RNA polymerase transcription elongation past template-encoded arresting sites. The arresting sites in DNA have the property of trapping a certain fraction of elongating RNA polymerases that pass through, resulting in locked ternary complexes. Cleavage of the nascent transcript by cleavage factors such as GreA or GreB allows the resumption of elongation from the new 3'terminus. GreA releases sequences of 2 to 3 nucleotides. The polypeptide is Transcription elongation factor GreA (Pelobacter propionicus (strain DSM 2379 / NBRC 103807 / OttBd1)).